The chain runs to 307 residues: ATP synthase gamma chain (307 aa).

Belongs to the ATPase gamma chain family. In terms of assembly, F-type ATPases have 2 components, CF(1) - the catalytic core - and CF(0) - the membrane proton channel. CF(1) has five subunits: alpha(3), beta(3), gamma(1), delta(1), epsilon(1). CF(0) has three main subunits: a, b and c.

The protein resides in the cell membrane. In terms of biological role, produces ATP from ADP in the presence of a proton gradient across the membrane. The gamma chain is believed to be important in regulating ATPase activity and the flow of protons through the CF(0) complex. In Bifidobacterium longum subsp. infantis (strain ATCC 15697 / DSM 20088 / JCM 1222 / NCTC 11817 / S12), this protein is ATP synthase gamma chain.